Consider the following 85-residue polypeptide: RNA-binding protein Hfq (85 aa).

The Sm domain occupies 10-70 (DAFLNQVRKE…ISTIIPQRPV (61 aa)).

This sequence belongs to the Hfq family. In terms of assembly, homohexamer.

Functionally, RNA chaperone that binds small regulatory RNA (sRNAs) and mRNAs to facilitate mRNA translational regulation in response to envelope stress, environmental stress and changes in metabolite concentrations. Also binds with high specificity to tRNAs. This chain is RNA-binding protein Hfq, found in Carboxydothermus hydrogenoformans (strain ATCC BAA-161 / DSM 6008 / Z-2901).